Consider the following 286-residue polypeptide: Shikimate dehydrogenase (NADP(+)) (286 aa).

Shikimate is bound by residues 20 to 22 (SLS) and Ser-67. Lys-71 (proton acceptor) is an active-site residue. Asn-92 and Asp-107 together coordinate shikimate. Residues 131 to 135 (GGGGA) and Ala-230 each bind NADP(+). Tyr-232 is a binding site for shikimate. Residue Gly-253 coordinates NADP(+).

It belongs to the shikimate dehydrogenase family. In terms of assembly, homodimer.

It catalyses the reaction shikimate + NADP(+) = 3-dehydroshikimate + NADPH + H(+). It participates in metabolic intermediate biosynthesis; chorismate biosynthesis; chorismate from D-erythrose 4-phosphate and phosphoenolpyruvate: step 4/7. Functionally, involved in the biosynthesis of the chorismate, which leads to the biosynthesis of aromatic amino acids. Catalyzes the reversible NADPH linked reduction of 3-dehydroshikimate (DHSA) to yield shikimate (SA). The protein is Shikimate dehydrogenase (NADP(+)) of Lactococcus lactis subsp. cremoris (strain MG1363).